The following is a 530-amino-acid chain: Estrogen receptor beta (530 aa).

The modulating stretch occupies residues 1–148 (MEIKNSPSSL…SPSAKRDAHF (148 aa)). Position 61 is a phosphoserine; alternate (Ser61). O-linked (GlcNAc) serine; alternate glycosylation is present at Ser61. Ser87 and Ser105 each carry phosphoserine; by MAPK. NR C4-type zinc fingers lie at residues 149-169 (CAVC…CEGC) and 185-209 (CPAT…LRKC). The segment at residues 149–214 (CAVCSDYASG…RLRKCYEVGM (66 aa)) is a DNA-binding region (nuclear receptor). In terms of domain architecture, NR LBD spans 264 to 498 (SPEQLVLTLL…DLLLEMLNAH (235 aa)). Residues 506 to 515 (SISGSECCST) show a composition bias toward polar residues. Positions 506-530 (SISGSECCSTEDSKSKEGSQNLQSQ) are disordered.

This sequence belongs to the nuclear hormone receptor family. NR3 subfamily. As to quaternary structure, binds DNA as a homodimer. Can form a heterodimer with ESR1. Interacts with NCOA1, NCOA3, NCOA5 and NCOA6 coactivators, leading to a strong increase of transcription of target genes. Interacts with UBE1C and AKAP13. Interacts with DNTTIP2. Interacts with CCDC62 in the presence of estradiol/E2; this interaction seems to enhance the transcription of target genes. Interacts with DNAAF4. Interacts with PRMT2. Interacts with CCAR2 (via N-terminus) in a ligand-independent manner. Interacts with RBM39, in the presence of estradiol (E2). Interacts with STUB1/CHIP. Post-translationally, phosphorylation at Ser-87 and Ser-105 recruits NCOA1. In terms of tissue distribution, expressed in prostate, ovary, Leydig cells and in epithelium of the efferent ductules and of the initial segment of the epididymis.

Its subcellular location is the nucleus. In terms of biological role, nuclear hormone receptor. Binds estrogens with an affinity similar to that of ESR1/ER-alpha, and activates expression of reporter genes containing estrogen response elements (ERE) in an estrogen-dependent manner. This chain is Estrogen receptor beta (Esr2), found in Mus musculus (Mouse).